Consider the following 609-residue polypeptide: Indole-3-acetic acid-amido synthetase GH3.17 (609 aa).

Belongs to the IAA-amido conjugating enzyme family.

Catalyzes the synthesis of indole-3-acetic acid (IAA)-amino acid conjugates, providing a mechanism for the plant to cope with the presence of excess auxin. Strongly reactive with Glu, Gln, Trp, Asp, Ala, Leu, Phe, Gly, Tyr, Met, Ile and Val. Appears to favor Glu over Asp while the other GH3 favor Asp over Glu. Little or no product formation with His, Ser, Thr, Arg, Lys, or Cys. Also active on pyruvic and butyric acid analogs of IAA, PAA and the synthetic auxin naphthaleneacetic acid (NAA). The two chlorinated synthetic auxin herbicides 2,4-D and 3,6-dichloro-o-anisic acid (dicamba) cannot be used as substrates. The protein is Indole-3-acetic acid-amido synthetase GH3.17 (GH3.17) of Arabidopsis thaliana (Mouse-ear cress).